Consider the following 286-residue polypeptide: Master replication protein (286 aa).

The CRESS-DNA virus Rep endonuclease domain maps to 2-96; that stretch reads ARQVICWCFT…LEGPWEYGEF (95 aa). Positions 9–12 match the RCR-1 motif; that stretch reads CFTL. Glutamate 33 and histidine 41 together coordinate a divalent metal cation. The short motif at 41–43 is the RCR-2 element; it reads HFQ. Residues 50-70 carry the Nuclear localization signal motif; that stretch reads KRTSLAGMKKLIPGAHFEKRR. Tyrosine 79 acts as the For DNA cleavage activity in catalysis. The RCR-3 motif lies at 79-82; it reads YAMK. Residue aspartate 84 participates in a divalent metal cation binding. Residues 96-102 carry the Nuclear localization signal motif; the sequence is FIPTIED. Position 180–188 (180–188) interacts with ATP; it reads GPQGGEGKT.

This sequence belongs to the nanoviridea/circoviridae replication-associated protein family. Homooligomer (Potential). Rep binds to repeated DNA motifs (iterons). Requires Mg(2+) as cofactor. Mn(2+) serves as cofactor.

The protein localises to the host nucleus. It carries out the reaction ATP + H2O = ADP + phosphate + H(+). In terms of biological role, essential for the replication of all genomic viral ssDNA (trans-replication). The closed circular ssDNA genome is first converted to a superhelical dsDNA. Rep binds a specific hairpin at the genome origin of replication. Introduces an endonucleolytic nick within the conserved sequence 5'-A[GT]TATTAC-3' in the intergenic region of the genome, thereby initiating the rolling circle replication (RCR). Following cleavage, binds covalently to the 5'-phosphate of DNA as a tyrosyl ester. The cleavage gives rise to a free 3'-OH that serves as a primer for the cellular DNA polymerase. The polymerase synthesizes the (+) strand DNA by rolling circle mechanism. After one round of replication, a Rep-catalyzed nucleotidyl transfer reaction releases a circular single-stranded virus genome, thereby terminating the replication. Displays origin-specific DNA cleavage, nucleotidyl transferase, ATPase and helicase activities. The protein is Master replication protein (DNA-R) of Astragalus sinicus (Chinese milk vetch).